We begin with the raw amino-acid sequence, 209 residues long: Mediator of RNA polymerase II transcription subunit 20 (209 aa).

It belongs to the Mediator complex subunit 20 family. As to quaternary structure, component of the Mediator complex.

The protein localises to the nucleus. Functionally, component of the Mediator complex, a coactivator involved in the regulated transcription of nearly all RNA polymerase II-dependent genes. Mediator functions as a bridge to convey information from gene-specific regulatory proteins to the basal RNA polymerase II transcription machinery. Mediator is recruited to promoters by direct interactions with regulatory proteins and serves as a scaffold for the assembly of a functional preinitiation complex with RNA polymerase II and the general transcription factors. This chain is Mediator of RNA polymerase II transcription subunit 20 (SRB2), found in Eremothecium gossypii (strain ATCC 10895 / CBS 109.51 / FGSC 9923 / NRRL Y-1056) (Yeast).